A 45-amino-acid polypeptide reads, in one-letter code: Defensin Tk-AMP-D3 (45 aa).

Disulfide bonds link cysteine 3–cysteine 45, cysteine 14–cysteine 34, cysteine 20–cysteine 39, and cysteine 24–cysteine 41.

Functionally, plant defense peptide. The protein is Defensin Tk-AMP-D3 of Triticum kiharae (Wheat).